The primary structure comprises 232 residues: LexA repressor (232 aa).

The span at 1–10 (MDDSNDSSSA) shows a compositional bias: polar residues. The interval 1-22 (MDDSNDSSSAGPDGRLHAVDPS) is disordered. Residues 47–67 (IREIGDAVGLTSTSSVAHQLR) constitute a DNA-binding region (H-T-H motif). Residues serine 156 and lysine 193 each act as for autocatalytic cleavage activity in the active site.

Belongs to the peptidase S24 family. Homodimer.

It catalyses the reaction Hydrolysis of Ala-|-Gly bond in repressor LexA.. In terms of biological role, represses a number of genes involved in the response to DNA damage (SOS response), including recA and lexA. In the presence of single-stranded DNA, RecA interacts with LexA causing an autocatalytic cleavage which disrupts the DNA-binding part of LexA, leading to derepression of the SOS regulon and eventually DNA repair. This is LexA repressor from Mycolicibacterium paratuberculosis (strain ATCC BAA-968 / K-10) (Mycobacterium paratuberculosis).